The primary structure comprises 671 residues: Probable potassium transport system protein Kup 2 (671 aa).

The next 12 membrane-spanning stretches (helical) occupy residues 18–38 (GFLIALGIVYGDIGTSPLYAM), 60–80 (VSLVIWTLTLITTVKYVLIAL), 103–123 (WLIVPAMIGGATLLADGALTP), 149–169 (VTTLIILAFLFLIQRFGASLV), 173–193 (FGPIMFIWFGFLGVSGLINSF), 218–238 (AGFFILGSIFLVTTGAEALYS), 252–272 (WPFVKICIILSYCGQGAWLLA), 292–312 (MVIYVVILSTLAAIIASQALI), 343–363 (LYIPAVNFALWVTTSFFVLYF), 373–393 (YSLAITITMLMTTTLLTYFLI), 402–422 (IAFISIGLFCIEGSFFAASLV), and 424–444 (FINGAYIVVLIALAIIFVMFI).

The protein belongs to the HAK/KUP transporter (TC 2.A.72) family.

It localises to the cell membrane. It carries out the reaction K(+)(in) + H(+)(in) = K(+)(out) + H(+)(out). Its function is as follows. Transport of potassium into the cell. Likely operates as a K(+):H(+) symporter. In Lactococcus lactis subsp. cremoris (strain SK11), this protein is Probable potassium transport system protein Kup 2.